Here is a 265-residue protein sequence, read N- to C-terminus: 1-(5-phosphoribosyl)-5-[(5-phosphoribosylamino)methylideneamino] imidazole-4-carboxamide isomerase (265 aa).

D8 acts as the Proton acceptor in catalysis. D139 functions as the Proton donor in the catalytic mechanism.

This sequence belongs to the HisA/HisF family.

The protein localises to the cytoplasm. It catalyses the reaction 1-(5-phospho-beta-D-ribosyl)-5-[(5-phospho-beta-D-ribosylamino)methylideneamino]imidazole-4-carboxamide = 5-[(5-phospho-1-deoxy-D-ribulos-1-ylimino)methylamino]-1-(5-phospho-beta-D-ribosyl)imidazole-4-carboxamide. Its pathway is amino-acid biosynthesis; L-histidine biosynthesis; L-histidine from 5-phospho-alpha-D-ribose 1-diphosphate: step 4/9. This is 1-(5-phosphoribosyl)-5-[(5-phosphoribosylamino)methylideneamino] imidazole-4-carboxamide isomerase from Herminiimonas arsenicoxydans.